Reading from the N-terminus, the 171-residue chain is Large ribosomal subunit protein bL17 (171 aa).

The span at 140–152 (KREIQTKAREEKR) shows a compositional bias: basic and acidic residues. The segment at 140–171 (KREIQTKAREEKRATRKSNSAPVNKETTSKKK) is disordered. Residues 156–165 (KSNSAPVNKE) show a composition bias toward polar residues.

Belongs to the bacterial ribosomal protein bL17 family. As to quaternary structure, part of the 50S ribosomal subunit. Contacts protein L32.

In Leptospira interrogans serogroup Icterohaemorrhagiae serovar Lai (strain 56601), this protein is Large ribosomal subunit protein bL17.